We begin with the raw amino-acid sequence, 665 residues long: Mitochondrial Rho GTPase 1 (665 aa).

The Cytoplasmic portion of the chain corresponds to 1–634 (MTNDVIRIVV…NQDPEEETNT (634 aa)). A Miro 1 domain is found at 3-177 (NDVIRIVVCG…FYLCQKAVMH (175 aa)). GTP is bound by residues 12–19 (GDEGVGKS), 61–67 (DTQFSNS), and 119–122 (NVFD). EF-hand domains follow at residues 193–228 (NAVA…CFGR) and 313–348 (EGYR…TPGI). Ca(2+) is bound by residues aspartate 206, aspartate 208, aspartate 210, tyrosine 212, glutamate 217, aspartate 326, aspartate 328, aspartate 330, and glutamate 337. One can recognise a Miro 2 domain in the interval 452–618 (RSVFNCFVLG…FIQLAEAAQQ (167 aa)). Residues 461–468 (GSHMSGKT), 498–502 (EMTGG), and 567–570 (LKAD) each bind GTP. A helical; Anchor for type IV membrane protein transmembrane segment spans residues 635 to 655 (IMPFALAGGATVLLAAAVAWI). Over 656–665 (FKNVRVAGRE) the chain is Mitochondrial intermembrane.

It belongs to the mitochondrial Rho GTPase family.

The protein resides in the mitochondrion outer membrane. In terms of biological role, mitochondrial GTPase involved in mitochondrial trafficking. Probably involved in control of anterograde transport of mitochondria and their subcellular distribution. This chain is Mitochondrial Rho GTPase 1 (GEM1), found in Yarrowia lipolytica (strain CLIB 122 / E 150) (Yeast).